The following is a 341-amino-acid chain: Casein kinase I isoform alpha (341 aa).

The Protein kinase domain maps to 16 to 284 (YKLIRKIGSG…YLRQLFRILF (269 aa)). Residues 22 to 30 (IGSGSFGDI) and Lys45 each bind ATP. Asp135 functions as the Proton acceptor in the catalytic mechanism. Positions 306–320 (QSQSSGVPGTNTTTQ) are enriched in polar residues. Positions 306–341 (QSQSSGVPGTNTTTQGATVPSAGVPAGVAPGGTTPQ) are disordered. The span at 321 to 341 (GATVPSAGVPAGVAPGGTTPQ) shows a compositional bias: low complexity.

It belongs to the protein kinase superfamily. CK1 Ser/Thr protein kinase family. Casein kinase I subfamily.

It carries out the reaction L-seryl-[protein] + ATP = O-phospho-L-seryl-[protein] + ADP + H(+). It catalyses the reaction L-threonyl-[protein] + ATP = O-phospho-L-threonyl-[protein] + ADP + H(+). The chain is Casein kinase I isoform alpha (kin-19) from Caenorhabditis elegans.